A 429-amino-acid polypeptide reads, in one-letter code: Adenosylhomocysteinase (429 aa).

Substrate is bound by residues Thr-64, Asp-136, and Glu-161. 162–164 (TTT) serves as a coordination point for NAD(+). Substrate contacts are provided by Lys-191 and Asp-195. NAD(+)-binding positions include Asn-196, 225–230 (GYGWCG), Glu-248, Asn-283, 304–306 (SGH), and Asn-351.

The protein belongs to the adenosylhomocysteinase family. The cofactor is NAD(+).

Its subcellular location is the cytoplasm. The catalysed reaction is S-adenosyl-L-homocysteine + H2O = L-homocysteine + adenosine. The protein operates within amino-acid biosynthesis; L-homocysteine biosynthesis; L-homocysteine from S-adenosyl-L-homocysteine: step 1/1. Functionally, may play a key role in the regulation of the intracellular concentration of adenosylhomocysteine. The sequence is that of Adenosylhomocysteinase from Thermosynechococcus vestitus (strain NIES-2133 / IAM M-273 / BP-1).